The primary structure comprises 361 residues: Chorismate synthase (361 aa).

NADP(+) is bound by residues arginine 48 and arginine 54. FMN contacts are provided by residues 125-127, 238-239, glycine 278, 293-297, and arginine 319; these read RSS, NA, and KPTSS.

Belongs to the chorismate synthase family. In terms of assembly, homotetramer. It depends on FMNH2 as a cofactor.

The catalysed reaction is 5-O-(1-carboxyvinyl)-3-phosphoshikimate = chorismate + phosphate. It participates in metabolic intermediate biosynthesis; chorismate biosynthesis; chorismate from D-erythrose 4-phosphate and phosphoenolpyruvate: step 7/7. Its function is as follows. Catalyzes the anti-1,4-elimination of the C-3 phosphate and the C-6 proR hydrogen from 5-enolpyruvylshikimate-3-phosphate (EPSP) to yield chorismate, which is the branch point compound that serves as the starting substrate for the three terminal pathways of aromatic amino acid biosynthesis. This reaction introduces a second double bond into the aromatic ring system. This is Chorismate synthase from Pectobacterium carotovorum subsp. carotovorum (strain PC1).